The primary structure comprises 130 residues: Glycine cleavage system H protein (130 aa).

One can recognise a Lipoyl-binding domain in the interval 25–106 (TALIGISDFA…PFDSWMIKVK (82 aa)). K66 is subject to N6-lipoyllysine.

This sequence belongs to the GcvH family. The glycine cleavage system is composed of four proteins: P, T, L and H. It depends on (R)-lipoate as a cofactor.

In terms of biological role, the glycine cleavage system catalyzes the degradation of glycine. The H protein shuttles the methylamine group of glycine from the P protein to the T protein. This Leptospira borgpetersenii serovar Hardjo-bovis (strain JB197) protein is Glycine cleavage system H protein.